The chain runs to 445 residues: tRNA-2-methylthio-N(6)-dimethylallyladenosine synthase (445 aa).

Residues 7–121 form the MTTase N-terminal domain; sequence KHFYIKSFGC…LPELIEKAAS (115 aa). Residues Cys16, Cys52, Cys84, Cys156, Cys160, and Cys163 each contribute to the [4Fe-4S] cluster site. The 233-residue stretch at 142-374 folds into the Radical SAM core domain; it reads RQVGASAFLT…QALLNQQQFD (233 aa). One can recognise a TRAM domain in the interval 377-438; sequence QQTIGRKATV…PNSVKGQFLD (62 aa).

The protein belongs to the methylthiotransferase family. MiaB subfamily. In terms of assembly, monomer. Requires [4Fe-4S] cluster as cofactor.

The protein localises to the cytoplasm. It catalyses the reaction N(6)-dimethylallyladenosine(37) in tRNA + (sulfur carrier)-SH + AH2 + 2 S-adenosyl-L-methionine = 2-methylsulfanyl-N(6)-dimethylallyladenosine(37) in tRNA + (sulfur carrier)-H + 5'-deoxyadenosine + L-methionine + A + S-adenosyl-L-homocysteine + 2 H(+). Catalyzes the methylthiolation of N6-(dimethylallyl)adenosine (i(6)A), leading to the formation of 2-methylthio-N6-(dimethylallyl)adenosine (ms(2)i(6)A) at position 37 in tRNAs that read codons beginning with uridine. This is tRNA-2-methylthio-N(6)-dimethylallyladenosine synthase from Zymomonas mobilis subsp. mobilis (strain ATCC 31821 / ZM4 / CP4).